A 110-amino-acid polypeptide reads, in one-letter code: Insulin (110 aa).

The signal sequence occupies residues 1–24; the sequence is MASLAALLPLLALLVLCRLDPAQA. Cystine bridges form between cysteine 31/cysteine 96, cysteine 43/cysteine 109, and cysteine 95/cysteine 100. Positions 57-87 are cleaved as a propeptide — c peptide; that stretch reads EVEELQVGQAELGGGPGAGGLQPSALELALQ.

Belongs to the insulin family. As to quaternary structure, heterodimer of a B chain and an A chain linked by two disulfide bonds.

It is found in the secreted. Its function is as follows. Insulin decreases blood glucose concentration. It increases cell permeability to monosaccharides, amino acids and fatty acids. It accelerates glycolysis, the pentose phosphate cycle, and glycogen synthesis in liver. The protein is Insulin (INS) of Oryctolagus cuniculus (Rabbit).